Reading from the N-terminus, the 304-residue chain is MSWIERIKSNITPTRKASIPEGVWTKCDSCGQVLYRAELERNLEVCPKCDHHMRMTARNRLHSLLDEGSLVELGSELEPKDVLKFRDSKKYKDRLASAQKETGEKDALVVMKGTLYGMPVVAAAFEFAFMGGSMGSVVGARFVRAVEQALEDNCPLICFSASGGARMQEALMSLMQMAKTSAALAKMQERGLPYISVLTDPTMGGVSASFAMLGDLNIAEPKALIGFAGPRVIEQTVREKLPPGFQRSEFLIEKGAIDMIVRRPEMRLKLASILAKLMNLPAPNPEAPREGVVVPPVPDQEPEA.

One can recognise a CoA carboxyltransferase N-terminal domain in the interval 23-292; it reads VWTKCDSCGQ…PNPEAPREGV (270 aa). Cys27, Cys30, Cys46, and Cys49 together coordinate Zn(2+). Residues 27-49 form a C4-type zinc finger; sequence CDSCGQVLYRAELERNLEVCPKC. The disordered stretch occupies residues 284–304; sequence NPEAPREGVVVPPVPDQEPEA. A compositionally biased stretch (pro residues) spans 295–304; the sequence is PPVPDQEPEA.

Belongs to the AccD/PCCB family. Acetyl-CoA carboxylase is a heterohexamer composed of biotin carboxyl carrier protein (AccB), biotin carboxylase (AccC) and two subunits each of ACCase subunit alpha (AccA) and ACCase subunit beta (AccD). Requires Zn(2+) as cofactor.

Its subcellular location is the cytoplasm. It catalyses the reaction N(6)-carboxybiotinyl-L-lysyl-[protein] + acetyl-CoA = N(6)-biotinyl-L-lysyl-[protein] + malonyl-CoA. The protein operates within lipid metabolism; malonyl-CoA biosynthesis; malonyl-CoA from acetyl-CoA: step 1/1. In terms of biological role, component of the acetyl coenzyme A carboxylase (ACC) complex. Biotin carboxylase (BC) catalyzes the carboxylation of biotin on its carrier protein (BCCP) and then the CO(2) group is transferred by the transcarboxylase to acetyl-CoA to form malonyl-CoA. The chain is Acetyl-coenzyme A carboxylase carboxyl transferase subunit beta from Escherichia coli O139:H28 (strain E24377A / ETEC).